The following is a 49-amino-acid chain: Small ribosomal subunit protein uS19c (49 aa).

This sequence belongs to the universal ribosomal protein uS19 family.

The protein localises to the plastid. It localises to the chloroplast. Its function is as follows. Protein S19 forms a complex with S13 that binds strongly to the 16S ribosomal RNA. This Sinapis alba (White mustard) protein is Small ribosomal subunit protein uS19c (rps19).